The primary structure comprises 501 residues: Probable cytosol aminopeptidase (501 aa).

2 residues coordinate Mn(2+): Lys268 and Asp273. The active site involves Lys280. Positions 291, 350, and 352 each coordinate Mn(2+). Arg354 is a catalytic residue.

It belongs to the peptidase M17 family. Mn(2+) is required as a cofactor.

The protein resides in the cytoplasm. The catalysed reaction is Release of an N-terminal amino acid, Xaa-|-Yaa-, in which Xaa is preferably Leu, but may be other amino acids including Pro although not Arg or Lys, and Yaa may be Pro. Amino acid amides and methyl esters are also readily hydrolyzed, but rates on arylamides are exceedingly low.. It carries out the reaction Release of an N-terminal amino acid, preferentially leucine, but not glutamic or aspartic acids.. Its function is as follows. Presumably involved in the processing and regular turnover of intracellular proteins. Catalyzes the removal of unsubstituted N-terminal amino acids from various peptides. The sequence is that of Probable cytosol aminopeptidase from Colwellia psychrerythraea (strain 34H / ATCC BAA-681) (Vibrio psychroerythus).